Reading from the N-terminus, the 265-residue chain is Glutamate racemase (265 aa).

Residues 9–10 and 41–42 contribute to the substrate site; these read DS and YG. The active-site Proton donor/acceptor is the Cys73. 74–75 contacts substrate; it reads NT. The active-site Proton donor/acceptor is the Cys180. Residue 181 to 182 coordinates substrate; the sequence is TH.

Belongs to the aspartate/glutamate racemases family.

The enzyme catalyses L-glutamate = D-glutamate. It participates in cell wall biogenesis; peptidoglycan biosynthesis. In terms of biological role, provides the (R)-glutamate required for cell wall biosynthesis. The protein is Glutamate racemase of Aliivibrio salmonicida (strain LFI1238) (Vibrio salmonicida (strain LFI1238)).